Consider the following 78-residue polypeptide: Conotoxin Cl11.1 (78 aa).

The first 19 residues, 1–19, serve as a signal peptide directing secretion; sequence MKLALTFLLILMILPLTTG. Residues 20 to 33 constitute a propeptide that is removed on maturation; sequence GKKSDNQALKRLGA. 4 cysteine pairs are disulfide-bonded: C47–C61, C54–C66, C60–C70, and C65–C77.

This sequence belongs to the conotoxin I1 superfamily. Expressed by the venom duct.

The protein resides in the secreted. In Californiconus californicus (California cone), this protein is Conotoxin Cl11.1.